A 102-amino-acid chain; its full sequence is MGVTLEGQRKESIWVLMRRQRARRALVKKIMIRPRKSVEASRRPCRAIHRRVKTLKELVPNTKTSEGLDGLFRQTADYILALEMKVKVMQTMVQVLTETNCV.

The 51-residue stretch at 32 to 82 (IRPRKSVEASRRPCRAIHRRVKTLKELVPNTKTSEGLDGLFRQTADYILAL) folds into the bHLH domain.

As to quaternary structure, homodimer. Expressed in the root vascular tissue and in root hairs and lateral root caps. Detected at the protein level in all cell files in the elongation zone.

Its subcellular location is the nucleus. Functionally, transcription factor that modulates the balance between cellular proliferation and differentiation in root growth. Does not act through cytokinin and auxin signaling, but by repressing peroxidase expression in the elongation zone. The sequence is that of Transcription factor UPBEAT1 (UPB1) from Arabidopsis thaliana (Mouse-ear cress).